The primary structure comprises 418 residues: Gamma-glutamyl phosphate reductase (418 aa).

The protein belongs to the gamma-glutamyl phosphate reductase family.

It localises to the cytoplasm. The enzyme catalyses L-glutamate 5-semialdehyde + phosphate + NADP(+) = L-glutamyl 5-phosphate + NADPH + H(+). Its pathway is amino-acid biosynthesis; L-proline biosynthesis; L-glutamate 5-semialdehyde from L-glutamate: step 2/2. Functionally, catalyzes the NADPH-dependent reduction of L-glutamate 5-phosphate into L-glutamate 5-semialdehyde and phosphate. The product spontaneously undergoes cyclization to form 1-pyrroline-5-carboxylate. In Halothermothrix orenii (strain H 168 / OCM 544 / DSM 9562), this protein is Gamma-glutamyl phosphate reductase.